The chain runs to 516 residues: Histidine ammonia-lyase 1 (516 aa).

The 5-imidazolinone (Ser-Gly) cross-link spans 147 to 149; sequence SSG. Ser148 bears the 2,3-didehydroalanine (Ser) mark.

It belongs to the PAL/histidase family. In terms of processing, contains an active site 4-methylidene-imidazol-5-one (MIO), which is formed autocatalytically by cyclization and dehydration of residues Ser-Ser-Gly.

It localises to the cytoplasm. The enzyme catalyses L-histidine = trans-urocanate + NH4(+). It participates in amino-acid degradation; L-histidine degradation into L-glutamate; N-formimidoyl-L-glutamate from L-histidine: step 1/3. This is Histidine ammonia-lyase 1 (hutH1) from Fusobacterium nucleatum subsp. nucleatum (strain ATCC 25586 / DSM 15643 / BCRC 10681 / CIP 101130 / JCM 8532 / KCTC 2640 / LMG 13131 / VPI 4355).